The primary structure comprises 277 residues: Phosphoribosylaminoimidazole-succinocarboxamide synthase (277 aa).

The protein belongs to the SAICAR synthetase family.

It catalyses the reaction 5-amino-1-(5-phospho-D-ribosyl)imidazole-4-carboxylate + L-aspartate + ATP = (2S)-2-[5-amino-1-(5-phospho-beta-D-ribosyl)imidazole-4-carboxamido]succinate + ADP + phosphate + 2 H(+). It participates in purine metabolism; IMP biosynthesis via de novo pathway; 5-amino-1-(5-phospho-D-ribosyl)imidazole-4-carboxamide from 5-amino-1-(5-phospho-D-ribosyl)imidazole-4-carboxylate: step 1/2. The polypeptide is Phosphoribosylaminoimidazole-succinocarboxamide synthase (Salinispora tropica (strain ATCC BAA-916 / DSM 44818 / JCM 13857 / NBRC 105044 / CNB-440)).